We begin with the raw amino-acid sequence, 152 residues long: MNPQSMKEQIRLDIELAVQRRVAVSVGDRFGTQSALFRRQFDEANAVSHRVQQTERLRAIKNKVVYLTTEIENRTKEVESLIRFDPKKVDILEELTDKVEELEANVSFEVDRIQGYQERYHGGQQTSLPDCNGELETTLTQWRLEQAPRCPP.

Residues 86-120 (PKKVDILEELTDKVEELEANVSFEVDRIQGYQERY) adopt a coiled-coil conformation.

The protein belongs to the herpesviridae UL96 family.

The sequence is that of Gene 35 protein (35) from Connochaetes taurinus (Blue wildebeest).